The chain runs to 396 residues: Tryptophan synthase beta chain (396 aa).

K88 carries the N6-(pyridoxal phosphate)lysine modification.

The protein belongs to the TrpB family. Tetramer of two alpha and two beta chains. Pyridoxal 5'-phosphate is required as a cofactor.

It catalyses the reaction (1S,2R)-1-C-(indol-3-yl)glycerol 3-phosphate + L-serine = D-glyceraldehyde 3-phosphate + L-tryptophan + H2O. It functions in the pathway amino-acid biosynthesis; L-tryptophan biosynthesis; L-tryptophan from chorismate: step 5/5. The beta subunit is responsible for the synthesis of L-tryptophan from indole and L-serine. In Actinobacillus pleuropneumoniae serotype 5b (strain L20), this protein is Tryptophan synthase beta chain.